The chain runs to 202 residues: MPPRPRFDRHAPERELPNINERISYSSLRVVDSDGTQLGVISREEALEVAKERELDLVLVSEKATPPVCRIMNYGKFKFEQEKKAKEAKKKSHQTEVKEVKMRYKIDQHDYQVRISQATRFLKAGDKVKCTVIFRGREIQHTALAETLLKRMSKDLEEKAEVQQSPKREGRNMIMFLTPRKTPLLKKESETTEPKKALRSIN.

Residues 178–202 are disordered; it reads TPRKTPLLKKESETTEPKKALRSIN. A compositionally biased stretch (basic and acidic residues) spans 185 to 196; it reads LKKESETTEPKK.

The protein belongs to the IF-3 family. In terms of assembly, monomer.

The protein resides in the cytoplasm. In terms of biological role, IF-3 binds to the 30S ribosomal subunit and shifts the equilibrium between 70S ribosomes and their 50S and 30S subunits in favor of the free subunits, thus enhancing the availability of 30S subunits on which protein synthesis initiation begins. This is Translation initiation factor IF-3 from Prochlorococcus marinus (strain NATL1A).